We begin with the raw amino-acid sequence, 234 residues long: Sugar fermentation stimulation protein A (234 aa).

Residues 201–220 constitute a DNA-binding region (H-T-H motif); it reads LLSEAQNKGVEVLAYKAELS.

Belongs to the SfsA family.

Functionally, binds to DNA non-specifically. Could be a regulatory factor involved in maltose metabolism. In Salmonella agona (strain SL483), this protein is Sugar fermentation stimulation protein A.